The following is a 970-amino-acid chain: MLRLSLSPTYSLGFHLLAMMTLLISHVDHITAETEMVEEGNETGECTGSYYCKKGVILPIWEPQDPSFGDKIARATVYFVAMVYMFLGVSIIADRFMSSIEVITSQEKEITIKKPNGETTKTTVRIWNETVSNLTLMALGSSAPEILLSVIEVCGHNFTAGDLGPSTIVGSAAFNMFIIIALCVYVVPDGETRKIKHLRVFFVTAAWSIFAYTWLYIILSVISPGVVEVWEGLLTFFFFPICVVFAWVADRRLLFYKYVYKRYRAGKQRGMIIEHEGDRPSSKTEIEMDGKVVNSHVENFLDGALVLEVDERDQDDEEARREMARILKELKQKHPEKEIEQLIELANYQVLSQQQKSRAFYRIQATRLMTGAGNILKRHAADQARKAVSMHEVNTEVAENDPVSKIFFEQGTYQCLENCGTVALTIIRRGGDLTNTVFVDFRTEDGTANAGSDYEFTEGTVVFKPGETQKEIRVGIIDDDIFEEDENFLVHLSNVKVSSEASEDGILEANHISTLACLGSPSTATVTIFDDDHAGIFTFEEPVTHVSESIGIMEVKVLRTSGARGNVIVPYKTIEGTARGGGEDFEDTCGELEFQNDEIVKTISVKVIDDEEYEKNKTFFLEIGEPRLVEMSEKKALLLNELGGFTITGKHLYGQPVLRKVHARDHPIPSTVITIADEYDDKQPLTSKEEEERRIAELGRPILGEHTKLEVIIEESYEFKSTVDKLIKKTNLALVVGTNSWREQFIEAITVSAGEDDDDDECGEEKLPSCFDYVMHFLTVFWKVLFAFVPPTEYWNGWACFIVSILMIGLLTAFIGDLASHFGCTIGLKDSVTAVVFVALGTSVPDTFASKVAATQDQYADASIGNVTGSNAVNVFLGIGVAWSIAAIYHAANGEQFKVSPGTLAFSVTLFTIFAFINVGVLLYRRRPEIGGELGGPRTAKLLTSCLFVLLWLLYIFFSSLEAYCHIKGF.

An N-terminal signal peptide occupies residues 1–32; that stretch reads MLRLSLSPTYSLGFHLLAMMTLLISHVDHITA. Over 33 to 71 the chain is Extracellular; the sequence is ETEMVEEGNETGECTGSYYCKKGVILPIWEPQDPSFGDK. The N-linked (GlcNAc...) asparagine glycan is linked to Asn-41. A helical transmembrane segment spans residues 72-92; sequence IARATVYFVAMVYMFLGVSII. The Cytoplasmic segment spans residues 93 to 133; the sequence is ADRFMSSIEVITSQEKEITIKKPNGETTKTTVRIWNETVSN. The helical transmembrane segment at 134-154 threads the bilayer; that stretch reads LTLMALGSSAPEILLSVIEVC. The Alpha-1 repeat unit spans residues 138-178; it reads ALGSSAPEILLSVIEVCGHNFTAGDLGPSTIVGSAAFNMFI. Residues 155-167 are Extracellular-facing; the sequence is GHNFTAGDLGPST. N-linked (GlcNAc...) asparagine glycosylation is present at Asn-157. The helical transmembrane segment at 168-188 threads the bilayer; it reads IVGSAAFNMFIIIALCVYVVP. At 189–201 the chain is on the cytoplasmic side; sequence DGETRKIKHLRVF. The helical transmembrane segment at 202-222 threads the bilayer; it reads FVTAAWSIFAYTWLYIILSVI. Residues 223 to 228 lie on the Extracellular side of the membrane; sequence SPGVVE. Residues 229-249 traverse the membrane as a helical segment; that stretch reads VWEGLLTFFFFPICVVFAWVA. The Cytoplasmic segment spans residues 250–797; it reads DRRLLFYKYV…FVPPTEYWNG (548 aa). The segment at 251–270 is putative calmodulin-binding region; the sequence is RRLLFYKYVYKRYRAGKQRG. Residues Ser-282 and Ser-389 each carry the phosphoserine modification. Calx-beta domains follow at residues 393–493 and 524–624; these read VNTE…VHLS and ATVT…LEIG. Ca(2+) is bound by residues Glu-417, Asp-453, Asp-478, Asp-479, Ile-481, Glu-483, Glu-486, Asp-530, Asp-531, Asp-532, Glu-548, Asp-584, Asp-610, Glu-611, Glu-612, and Glu-715. The chain crosses the membrane as a helical span at residues 798 to 818; that stretch reads WACFIVSILMIGLLTAFIGDL. Over 819–821 the chain is Extracellular; sequence ASH. A helical transmembrane segment spans residues 822–842; sequence FGCTIGLKDSVTAVVFVALGT. Residues 839-875 form an Alpha-2 repeat; that stretch reads ALGTSVPDTFASKVAATQDQYADASIGNVTGSNAVNV. Topologically, residues 843 to 871 are cytoplasmic; that stretch reads SVPDTFASKVAATQDQYADASIGNVTGSN. The helical transmembrane segment at 872-892 threads the bilayer; the sequence is AVNVFLGIGVAWSIAAIYHAA. Topologically, residues 893 to 903 are extracellular; sequence NGEQFKVSPGT. The chain crosses the membrane as a helical span at residues 904 to 924; it reads LAFSVTLFTIFAFINVGVLLY. Residues 925 to 941 are Cytoplasmic-facing; sequence RRRPEIGGELGGPRTAK. A helical membrane pass occupies residues 942-962; the sequence is LLTSCLFVLLWLLYIFFSSLE. The Extracellular portion of the chain corresponds to 963–970; that stretch reads AYCHIKGF.

It belongs to the Ca(2+):cation antiporter (CaCA) (TC 2.A.19) family. SLC8 subfamily.

It is found in the cell membrane. The catalysed reaction is Ca(2+)(in) + 3 Na(+)(out) = Ca(2+)(out) + 3 Na(+)(in). Its activity is regulated as follows. Activated by micromolar levels of Ca(2+). Functionally, mediates the exchange of one Ca(2+) ion against three to four Na(+) ions across the cell membrane, and thereby contributes to the regulation of cytoplasmic Ca(2+) levels and Ca(2+)-dependent cellular processes. Contributes to Ca(2+) transport during excitation-contraction coupling in muscle. In a first phase, voltage-gated channels mediate the rapid increase of cytoplasmic Ca(2+) levels due to release of Ca(2+) stores from the endoplasmic reticulum. SLC8A1 mediates the export of Ca(2+) from the cell during the next phase, so that cytoplasmic Ca(2+) levels rapidly return to baseline. Required for normal embryonic heart development and the onset of heart contractions. This Cavia porcellus (Guinea pig) protein is Sodium/calcium exchanger 1 (SLC8A1).